The following is a 79-amino-acid chain: Conotoxin ArMSGL-0121 (79 aa).

The first 20 residues, 1-20 (MSRLGIMVLTLLLLVFIVTS), serve as a signal peptide directing secretion. Residues 21 to 44 (HQDAGEKQATQRNAINFRWRRSFT) constitute a propeptide that is removed on maturation. Disulfide bonds link Cys-52–Cys-64, Cys-56–Cys-73, and Cys-63–Cys-77. At Leu-78 the chain carries Leucine amide.

This sequence belongs to the conotoxin O3 superfamily. In terms of tissue distribution, expressed by the venom duct.

It localises to the secreted. This is Conotoxin ArMSGL-0121 from Conus arenatus (Sand-dusted cone).